The following is a 96-amino-acid chain: Neurotoxin beta-KTx 31.1 (96 aa).

The N-terminal stretch at 1–21 is a signal peptide; that stretch reads MQAKRTILLLLLLGMVALSSC. Residues 22 to 29 constitute a propeptide that is removed on maturation; that stretch reads GLREKHVQ. Residues 56 to 93 form the BetaSPN-type CS-alpha/beta domain; the sequence is QYGCPIIKDYCSFHCNDLEKHEGYCHGTKCKCNIPNQY. 3 disulfides stabilise this stretch: cysteine 59/cysteine 80, cysteine 66/cysteine 85, and cysteine 70/cysteine 87.

Belongs to the long chain scorpion toxin family. Class 1 subfamily. Expressed by the venom gland.

It is found in the secreted. Its function is as follows. Inhibits voltage-gated potassium channel. The polypeptide is Neurotoxin beta-KTx 31.1 (Lychas mucronatus (Chinese swimming scorpion)).